A 276-amino-acid chain; its full sequence is Sulfur carrier protein FdhD (276 aa).

The Cysteine persulfide intermediate role is filled by Cys-118.

Belongs to the FdhD family.

Its subcellular location is the cytoplasm. Required for formate dehydrogenase (FDH) activity. Acts as a sulfur carrier protein that transfers sulfur from IscS to the molybdenum cofactor prior to its insertion into FDH. In Mycobacterium bovis (strain ATCC BAA-935 / AF2122/97), this protein is Sulfur carrier protein FdhD.